An 86-amino-acid chain; its full sequence is Evasin-3 (86 aa).

Residues 1–20 (MRALLARLLLCVLVVSDSKG) form the signal peptide. Cystine bridges form between cysteine 42–cysteine 57, cysteine 46–cysteine 59, and cysteine 53–cysteine 70. Asparagine 45 carries N-linked (GlcNAc...) asparagine glycosylation. A glycan (N-linked (GlcNAc...) asparagine) is linked at asparagine 76.

Monomer.

The protein localises to the secreted. Its function is as follows. Salivary chemokine-binding protein which shows chemokine neutralizing activity and binds to host chemokines CXCL1, CXCL2, CXCL3, CXCL5, CXCL6 and CXCL8. Binds to CXCL8 with 1:1 stoichiometry. Disrupts CXCL8 homodimer formation, disrupts the glycosaminoglycan-binding site of CXCL8 and inhibits the interaction of CXCL8 with CXCR2. This chain is Evasin-3, found in Rhipicephalus sanguineus (Brown dog tick).